A 211-amino-acid polypeptide reads, in one-letter code: uncharacterized protein (211 aa).

A disordered region spans residues 1 to 43 (MRPEVGREPAALQPRQRPRSDHQLHRSPFTVPPRTPACRSPGP).

This is an uncharacterized protein from Homo sapiens (Human).